The sequence spans 122 residues: Large ribosomal subunit protein uL14 (122 aa).

This sequence belongs to the universal ribosomal protein uL14 family. In terms of assembly, part of the 50S ribosomal subunit. Forms a cluster with proteins L3 and L19. In the 70S ribosome, L14 and L19 interact and together make contacts with the 16S rRNA in bridges B5 and B8.

Binds to 23S rRNA. Forms part of two intersubunit bridges in the 70S ribosome. This is Large ribosomal subunit protein uL14 from Leuconostoc citreum (strain KM20).